The chain runs to 685 residues: Translation initiation factor IF-2 (685 aa).

The region spanning 185 to 354 (KRPPVVTVMG…LLTAEMQELK (170 aa)) is the tr-type G domain. Residues 194 to 201 (GHVDHGKT) form a G1 region. 194 to 201 (GHVDHGKT) serves as a coordination point for GTP. The tract at residues 219–223 (GITQH) is G2. Positions 240 to 243 (DTPG) are G3. Residues 240–244 (DTPGH) and 294–297 (NKMD) contribute to the GTP site. The G4 stretch occupies residues 294–297 (NKMD). Residues 330 to 332 (SAH) are G5.

It belongs to the TRAFAC class translation factor GTPase superfamily. Classic translation factor GTPase family. IF-2 subfamily.

Its subcellular location is the cytoplasm. Functionally, one of the essential components for the initiation of protein synthesis. Protects formylmethionyl-tRNA from spontaneous hydrolysis and promotes its binding to the 30S ribosomal subunits. Also involved in the hydrolysis of GTP during the formation of the 70S ribosomal complex. The protein is Translation initiation factor IF-2 of Clostridium tetani (strain Massachusetts / E88).